The following is a 165-amino-acid chain: Phosphopantetheine adenylyltransferase (165 aa).

Residue Ser-10 coordinates substrate. Residues 10–11 and His-18 each bind ATP; that span reads SF. Substrate contacts are provided by Lys-42, Leu-74, and Arg-88. ATP-binding positions include 89–91, Glu-99, and 124–130; these read GLR and YSFISSS.

It belongs to the bacterial CoaD family. Homohexamer. The cofactor is Mg(2+).

It is found in the cytoplasm. The enzyme catalyses (R)-4'-phosphopantetheine + ATP + H(+) = 3'-dephospho-CoA + diphosphate. It participates in cofactor biosynthesis; coenzyme A biosynthesis; CoA from (R)-pantothenate: step 4/5. In terms of biological role, reversibly transfers an adenylyl group from ATP to 4'-phosphopantetheine, yielding dephospho-CoA (dPCoA) and pyrophosphate. The protein is Phosphopantetheine adenylyltransferase of Macrococcus caseolyticus (strain JCSC5402) (Macrococcoides caseolyticum).